Consider the following 836-residue polypeptide: MAMSCKDGKLGCLDNGKYVRYTPEQVEALERLYHDCPKPSSIRRQQLIRECPILSNIEPKQIKVWFQNRRCREKQRKEASRLQAVNRKLTAMNKLLMEENDRLQKQVSQLVHENSYFRQHTPNPSLPAKDTSCESVVTSGQHQLASQNPQRDASPAGLLSIAEETLAEFLSKATGTAVEWVQMPGMKPGPDSIGIIAISHGCTGVAARACGLVGLEPTRVAEIVKDRPSWFRECRAVEVMNVLPTANGGTVELLYMQLYAPTTLAPPRDFWLLRYTSVLEDGSLVVCERSLKSTQNGPSMPLVQNFVRAEMLSSGYLIRPCDGGGSIIHIVDHMDLEACSVPEVLRPLYESPKVLAQKTTMAALRQLKQIAQEVTQTNSSVNGWGRRPAALRALSQRLSRGFNEAVNGFTDEGWSVIGDSMDDVTITVNSSPDKLMGLNLTFANGFAPVSNVVLCAKASMLLQNVPPAILLRFLREHRSEWADNNIDAYLAAAVKVGPCSARVGGFGGQVILPLAHTIEHEEFMEVIKLEGLGHSPEDAIVPRDIFLLQLCSGMDENAVGTCAELIFAPIDASFADDAPLLPSGFRIIPLDSAKEVSSPNRTLDLASALEIGSAGTKASTDQSGNSTCARSVMTIAFEFGIESHMQEHVASMARQYVRGIISSVQRVALALSPSHISSQVGLRTPLGTPEAQTLARWICQSYRGYMGVELLKSNSDGNESILKNLWHHTDAIICCSMKALPVFTFANQAGLDMLETTLVALQDISLEKIFDDNGRKTLCSEFPQIMQQGFACLQGGICLSSMGRPVSYERAVAWKVLNEEENAHCICFVFINWSFV.

A DNA-binding region (homeobox) is located at residues Asp14–Lys77. The stretch at Arg72–Ser115 forms a coiled coil. An START domain is found at Arg151–Ser379.

It belongs to the HD-ZIP homeobox family. Class III subfamily. In terms of assembly, interacts with ESR1 and ESR2. Interacts with ZPR3. Highly expressed the developing vascular elements and the adaxial portion of cotyledons. Expressed in developing ovules, stamens and carpels. Expressed in procambium and shoot meristem.

It localises to the nucleus. Probable transcription factor involved in the regulation of meristem development to promote lateral organ formation. May regulates procambial and vascular tissue formation or maintenance, and vascular development in inflorescence stems. The sequence is that of Homeobox-leucine zipper protein ATHB-15 (ATHB-15) from Arabidopsis thaliana (Mouse-ear cress).